We begin with the raw amino-acid sequence, 158 residues long: Transcriptional repressor NrdR (158 aa).

A zinc finger lies at 3-34; that stretch reads CPFCGNADTQVVDSRVSEEGDTIRRRRRCLSC. Residues 49 to 139 enclose the ATP-cone domain; it reads PSVVKRNGSR…VYKNFEDIGE (91 aa).

Belongs to the NrdR family. Requires Zn(2+) as cofactor.

Its function is as follows. Negatively regulates transcription of bacterial ribonucleotide reductase nrd genes and operons by binding to NrdR-boxes. The polypeptide is Transcriptional repressor NrdR (Bordetella petrii (strain ATCC BAA-461 / DSM 12804 / CCUG 43448)).